Here is a 622-residue protein sequence, read N- to C-terminus: MAMAVFKAPLKGEFHGARKMEGKQYKHHLLQQQSTGRRRVFVQTDTGCVLGVELDRNDNVHTVKKRLQIAFNFPTEESSLTFGDMVLKNDLSAVRNDSPLLLKRNLMHRSSSTPCLSPTGNDLQRKDRSGPIEILSHSPCFLSLKQTANDIVKAMKMGVEPIPVNGGLGGAYYFRDEKGQSVAIVKPTDEEPFAPNNPKGFVGKALGQPGLKPSVRVGETGFREVAAYLLDYDHFANVPPTALVKITHSVFNVNDGMDGNKSREKKKLVSSKIASFQKFVPHDFDASDHGTSSFPVASVHRIGILDIRILNTDRHGGNLLVKKLDDGGVGRFGQVELIPIDHGLCLPETLEDPYFEWIHWPQASIPFSEEELDYIQSLDPVKDCEMLRRELPMIREACLRVLVLCTVFLKEAAVFGLCLAEIGEMMTREFRAGEEEPSELEMLCIEAKRLTTEQDVLSPKSDGEGETEFQFDIDYNELDSVYGSETETDEFFAKNPFSNGRSSLGELKESIAEEEEDDEEEAKLTLSLSKLSTSMKNNLSNTMGSGYLKPPKDNQTDKALVSHKSANVQLPLSVNFVKLADMKEVEWVVFLERFQELLYSAFAERKTMTLRNTQRLGTSCKF.

The region spanning 38 to 95 (RRVFVQTDTGCVLGVELDRNDNVHTVKKRLQIAFNFPTEESSLTFGDMVLKNDLSAVR) is the Ubiquitin-like; degenerate domain. The PI3K/PI4K catalytic domain occupies 158 to 459 (GVEPIPVNGG…LTTEQDVLSP (302 aa)). Residues 164–170 (VNGGLGG) form a G-loop region. Residues 165–171 (NGGLGGA), Lys186, and 277–280 (QKFV) each bind ATP. Residues 310–318 (LNTDRHGGN) are catalytic loop. The segment at 339–365 (PIDHGLCLPETLEDPYFEWIHWPQASI) is activation loop. Position 341 (Asp341) interacts with ATP. Ser565 is modified (phosphoserine).

This sequence belongs to the PI3/PI4-kinase family. Type II PI4K subfamily.

The enzyme catalyses a 1,2-diacyl-sn-glycero-3-phospho-(1D-myo-inositol) + ATP = a 1,2-diacyl-sn-glycero-3-phospho-(1D-myo-inositol 4-phosphate) + ADP + H(+). Its function is as follows. The phosphorylation of phosphatidylinositol (PI) to PI4P is the first committed step in the generation of phosphatidylinositol 4,5-bisphosphate (PIP2), a precursor of the second messenger inositol 1,4,5-trisphosphate (InsP3). The polypeptide is Phosphatidylinositol 4-kinase gamma 6 (PI4KG6) (Arabidopsis thaliana (Mouse-ear cress)).